A 692-amino-acid polypeptide reads, in one-letter code: Elongation factor G (692 aa).

Residues 8–283 (NRIRNIGIAA…AVIDYLPAPT (276 aa)) form the tr-type G domain. GTP is bound by residues 17–24 (AHIDAGKT), 81–85 (DTPGH), and 135–138 (NKMD).

This sequence belongs to the TRAFAC class translation factor GTPase superfamily. Classic translation factor GTPase family. EF-G/EF-2 subfamily.

It localises to the cytoplasm. Catalyzes the GTP-dependent ribosomal translocation step during translation elongation. During this step, the ribosome changes from the pre-translocational (PRE) to the post-translocational (POST) state as the newly formed A-site-bound peptidyl-tRNA and P-site-bound deacylated tRNA move to the P and E sites, respectively. Catalyzes the coordinated movement of the two tRNA molecules, the mRNA and conformational changes in the ribosome. In Helicobacter pylori (strain J99 / ATCC 700824) (Campylobacter pylori J99), this protein is Elongation factor G (fusA).